An 88-amino-acid chain; its full sequence is MANSPQAKKRARQNERRFAINKARRSRIRTHLRTVEEAIASGDQAAATAALKAAQPEMMRGVTKGVMHKNTAARKMSRLSSRVKALGA.

Disordered regions lie at residues 1-25 (MANSPQAKKRARQNERRFAINKARR) and 61-88 (GVTKGVMHKNTAARKMSRLSSRVKALGA).

This sequence belongs to the bacterial ribosomal protein bS20 family.

Its function is as follows. Binds directly to 16S ribosomal RNA. The polypeptide is Small ribosomal subunit protein bS20 (Jannaschia sp. (strain CCS1)).